The sequence spans 252 residues: Phosphate import ATP-binding protein PstB 1 (252 aa).

The ABC transporter domain occupies 6-247 (LKVNDLSVYY…PQKQETEDYI (242 aa)). 38 to 45 (GPSGSGKS) contributes to the ATP binding site.

It belongs to the ABC transporter superfamily. Phosphate importer (TC 3.A.1.7) family. As to quaternary structure, the complex is composed of two ATP-binding proteins (PstB), two transmembrane proteins (PstC and PstA) and a solute-binding protein (PstS).

It localises to the cell membrane. The enzyme catalyses phosphate(out) + ATP + H2O = ADP + 2 phosphate(in) + H(+). In terms of biological role, part of the ABC transporter complex PstSACB involved in phosphate import. Responsible for energy coupling to the transport system. In Streptococcus mutans serotype c (strain ATCC 700610 / UA159), this protein is Phosphate import ATP-binding protein PstB 1.